Here is a 309-residue protein sequence, read N- to C-terminus: Ribosomal RNA small subunit methyltransferase H (309 aa).

S-adenosyl-L-methionine is bound by residues 33–35, Asp53, Phe79, Asp100, and Gln107; that span reads GGH.

The protein belongs to the methyltransferase superfamily. RsmH family.

Its subcellular location is the cytoplasm. The catalysed reaction is cytidine(1402) in 16S rRNA + S-adenosyl-L-methionine = N(4)-methylcytidine(1402) in 16S rRNA + S-adenosyl-L-homocysteine + H(+). In terms of biological role, specifically methylates the N4 position of cytidine in position 1402 (C1402) of 16S rRNA. The polypeptide is Ribosomal RNA small subunit methyltransferase H (Clostridium botulinum (strain 657 / Type Ba4)).